A 138-amino-acid chain; its full sequence is Large ribosomal subunit protein uL16 (138 aa).

The segment covering 1 to 15 (MLSPRKVKYRKKQRG) has biased composition (basic residues). Residues 1 to 20 (MLSPRKVKYRKKQRGRLSGE) are disordered.

The protein belongs to the universal ribosomal protein uL16 family. Part of the 50S ribosomal subunit.

In terms of biological role, binds 23S rRNA and is also seen to make contacts with the A and possibly P site tRNAs. This chain is Large ribosomal subunit protein uL16, found in Borrelia turicatae (strain 91E135).